Here is a 121-residue protein sequence, read N- to C-terminus: Fluoride-specific ion channel FluC 3 (121 aa).

A run of 4 helical transmembrane segments spans residues 3–23 (VFLP…RYLL), 40–60 (FTIN…ALGG), 69–89 (VLAT…NEMV), and 101–121 (AAYL…GFLV). Na(+) contacts are provided by G76 and S79.

The protein belongs to the fluoride channel Fluc/FEX (TC 1.A.43) family.

It is found in the cell membrane. It catalyses the reaction fluoride(in) = fluoride(out). Its activity is regulated as follows. Na(+) is not transported, but it plays an essential structural role and its presence is essential for fluoride channel function. Functionally, fluoride-specific ion channel. Important for reducing fluoride concentration in the cell, thus reducing its toxicity. This is Fluoride-specific ion channel FluC 3 from Bifidobacterium longum (strain NCC 2705).